The sequence spans 378 residues: Cobalt-precorrin-5B C(1)-methyltransferase (378 aa).

The protein belongs to the CbiD family.

It catalyses the reaction Co-precorrin-5B + S-adenosyl-L-methionine = Co-precorrin-6A + S-adenosyl-L-homocysteine. It functions in the pathway cofactor biosynthesis; adenosylcobalamin biosynthesis; cob(II)yrinate a,c-diamide from sirohydrochlorin (anaerobic route): step 6/10. Its function is as follows. Catalyzes the methylation of C-1 in cobalt-precorrin-5B to form cobalt-precorrin-6A. This Synechocystis sp. (strain ATCC 27184 / PCC 6803 / Kazusa) protein is Cobalt-precorrin-5B C(1)-methyltransferase.